The sequence spans 282 residues: MWADIYHKLVEIYDIKAVKFLLDVLKILIIAFIGIKFADFLIYRFYKLYSKSKIQLPQRKIDTLTSLTKNAVRYIIYFLAGASILKLFNIDMTSLLAVAGIGSLAIGFGAQNLVKDMISGFFIIFEDQFSVGDYVTINGISGTVEEIGLRVTKIRGFSDGLHIIPNGEIKMVTNLTKDSMMAVVNIAFPIDEDVDKIIEGLQEICEEVKKSRDDLIEGPTVLGITDMQDSKLVIMVYAKTQPMQKWAVERDIRYRVKKMFDQKNISFPYPRTTVILSEKKTN.

The Periplasmic portion of the chain corresponds to 1-23 (MWADIYHKLVEIYDIKAVKFLLD). Residues 24–46 (VLKILIIAFIGIKFADFLIYRFY) form a helical membrane-spanning segment. Topologically, residues 47–66 (KLYSKSKIQLPQRKIDTLTS) are cytoplasmic. Residues 67 to 87 (LTKNAVRYIIYFLAGASILKL) traverse the membrane as a helical segment. Residues 88 to 89 (FN) are Periplasmic-facing. A helical transmembrane segment spans residues 90–110 (IDMTSLLAVAGIGSLAIGFGA). Residues 111-282 (QNLVKDMISG…TVILSEKKTN (172 aa)) are Cytoplasmic-facing.

It belongs to the MscS (TC 1.A.23) family. Homoheptamer.

Its subcellular location is the cell inner membrane. Its function is as follows. Mechanosensitive ion channel that participates in the regulation of osmotic pressure changes within the cell, opening in response to stretch forces in the membrane lipid bilayer, without the need for other proteins. Has high selectivity for anions, and may contribute to resistance to hypoosmotic shock. This chain is Small-conductance mechanosensitive channel, found in Caldanaerobacter subterraneus subsp. tengcongensis (strain DSM 15242 / JCM 11007 / NBRC 100824 / MB4) (Thermoanaerobacter tengcongensis).